Consider the following 257-residue polypeptide: 4-hydroxy-tetrahydrodipicolinate reductase (257 aa).

NAD(+) contacts are provided by residues 7–12 (GAAGRM), aspartate 32, 91–93 (GTT), and 115–118 (SPNF). Histidine 147 (proton donor/acceptor) is an active-site residue. Histidine 148 is a binding site for (S)-2,3,4,5-tetrahydrodipicolinate. Lysine 151 acts as the Proton donor in catalysis. 157-158 (GT) serves as a coordination point for (S)-2,3,4,5-tetrahydrodipicolinate.

The protein belongs to the DapB family.

The protein resides in the cytoplasm. It carries out the reaction (S)-2,3,4,5-tetrahydrodipicolinate + NAD(+) + H2O = (2S,4S)-4-hydroxy-2,3,4,5-tetrahydrodipicolinate + NADH + H(+). The enzyme catalyses (S)-2,3,4,5-tetrahydrodipicolinate + NADP(+) + H2O = (2S,4S)-4-hydroxy-2,3,4,5-tetrahydrodipicolinate + NADPH + H(+). It functions in the pathway amino-acid biosynthesis; L-lysine biosynthesis via DAP pathway; (S)-tetrahydrodipicolinate from L-aspartate: step 4/4. Catalyzes the conversion of 4-hydroxy-tetrahydrodipicolinate (HTPA) to tetrahydrodipicolinate. This chain is 4-hydroxy-tetrahydrodipicolinate reductase, found in Archaeoglobus fulgidus (strain ATCC 49558 / DSM 4304 / JCM 9628 / NBRC 100126 / VC-16).